The following is a 1367-amino-acid chain: Phospholipid-transporting ATPase C4F10.16c (1367 aa).

Residues 1–154 are Cytoplasmic-facing; it reads MPSLINFDAI…PKNLWNQFKN (154 aa). The interval 34 to 104 is disordered; it reads HNGSLAHEGP…KKNEAGTESG (71 aa). Residues 50 to 70 are compositionally biased toward basic and acidic residues; sequence SSRHHESQFSQEAHAEQRSRD. The span at 77–92 shows a compositional bias: polar residues; that stretch reads FEGSCNNSDQSWTSRV. The helical transmembrane segment at 155–172 threads the bilayer; it reads IANAFFLFVTLLQCIPLF. Topologically, residues 173-177 are lumenal; sequence CPEHL. A helical transmembrane segment spans residues 178–197; the sequence is GLSFIPLSVILLTTAIKDGI. The Cytoplasmic segment spans residues 198 to 482; it reads EDYRRCVLDK…PSKRSRITRD (285 aa). Residues 483–503 traverse the membrane as a helical segment; sequence LNWTIILNFLLLFAMCLFSGV. At 504-531 the chain is on the lumenal side; sequence LRSIYSAQNNSARVFELSKNSNTAPAHG. A helical membrane pass occupies residues 532–552; that stretch reads IISIFTSLILFQNLVPISLYI. Residues 553–1091 lie on the Cytoplasmic side of the membrane; it reads TMDIVRSIQS…GRWDYKRMSQ (539 aa). Aspartate 600 serves as the catalytic 4-aspartylphosphate intermediate. Aspartate 600, lysine 601, threonine 602, glutamate 724, phenylalanine 765, serine 767, lysine 770, lysine 788, arginine 822, threonine 823, threonine 902, glycine 903, aspartate 904, arginine 1009, and lysine 1015 together coordinate ATP. Residue aspartate 600 coordinates Mg(2+). Threonine 602 lines the Mg(2+) pocket. Aspartate 1035 is a binding site for Mg(2+). Positions 1038 and 1039 each coordinate ATP. Aspartate 1039 is a Mg(2+) binding site. The chain crosses the membrane as a helical span at residues 1092 to 1112; the sequence is MISFFFYKNVIWTFILFWYQF. Residues 1113–1124 lie on the Lumenal side of the membrane; that stretch reads YNEFDGNYIFDY. A helical membrane pass occupies residues 1125–1145; it reads TYVMLFNLLFTSLPVIIAGCF. Topologically, residues 1146–1174 are cytoplasmic; that stretch reads DQDVDASVSMKNPSLYQRGILGLEWNGKR. Residues 1175-1197 form a helical membrane-spanning segment; sequence FWSYMLDGIYQSLVCFGVALFVF. Residues 1198–1212 are Lumenal-facing; it reads KFGDFVSWTGRNIEC. A helical membrane pass occupies residues 1213–1233; it reads IEDIGLFISSPTIFVINIFIL. Residues 1234–1240 lie on the Cytoplasmic side of the membrane; the sequence is MNQERLN. Residues 1241-1261 form a helical membrane-spanning segment; sequence LISLITWMFSIGVFWIWTFIY. Topologically, residues 1262–1276 are lumenal; the sequence is SEVGPSYAFHKSASR. A helical transmembrane segment spans residues 1277–1297; sequence TCQTFGFWCVTVLTIALCLLP. Arginine 1298 provides a ligand contact to a 1,2-diacyl-sn-glycero-3-phospho-L-serine. At 1298 to 1367 the chain is on the cytoplasmic side; it reads RFSYICLQKL…TSVSFDDSNK (70 aa).

Belongs to the cation transport ATPase (P-type) (TC 3.A.3) family. Type IV subfamily. The cofactor is Mg(2+).

The protein resides in the cell membrane. The protein localises to the endoplasmic reticulum membrane. It catalyses the reaction ATP + H2O + phospholipidSide 1 = ADP + phosphate + phospholipidSide 2.. The enzyme catalyses a 1,2-diacyl-sn-glycero-3-phosphoethanolamine(out) + ATP + H2O = a 1,2-diacyl-sn-glycero-3-phosphoethanolamine(in) + ADP + phosphate + H(+). The catalysed reaction is a 1,2-diacyl-sn-glycero-3-phosphocholine(out) + ATP + H2O = a 1,2-diacyl-sn-glycero-3-phosphocholine(in) + ADP + phosphate + H(+). It carries out the reaction a beta-D-glucosyl-(1&lt;-&gt;1')-N-acylsphing-4-enine(out) + ATP + H2O = a beta-D-glucosyl-(1&lt;-&gt;1')-N-acylsphing-4-enine(in) + ADP + phosphate + H(+). It catalyses the reaction a 1,2-diacyl-sn-glycero-3-phospho-L-serine(out) + ATP + H2O = a 1,2-diacyl-sn-glycero-3-phospho-L-serine(in) + ADP + phosphate + H(+). Functionally, catalytic component of a P4-ATPase flippase complex which catalyzes the hydrolysis of ATP coupled to the transport of glucosylceramide, phosphatidylcholine, phosphatidylethanolamine, and small amounts of phosphatidylserine from the lumenal to the cytosolic leaflet of the cell membrane and ensures the maintenance of asymmetric distribution of phospholipids. In Schizosaccharomyces pombe (strain 972 / ATCC 24843) (Fission yeast), this protein is Phospholipid-transporting ATPase C4F10.16c.